The primary structure comprises 716 residues: ATP-dependent DNA helicase DinG (716 aa).

The 278-residue stretch at 17–294 folds into the Helicase ATP-binding domain; sequence ALQEQIPDFI…TCMEQFRPKT (278 aa). 54–61 serves as a coordination point for ATP; it reads APTGVGKT. C120 contacts [4Fe-4S] cluster. The DEAH box signature appears at 131–134; sequence EPTQ. The [4Fe-4S] cluster site is built by C194, C199, and C205. A DEAH box motif is present at residues 248–251; that stretch reads DEGH. Residues 487–698 form the Helicase C-terminal domain; sequence ALDSPFNHCE…VFPIEQPEVP (212 aa).

This sequence belongs to the helicase family. DinG subfamily. Type 1 sub-subfamily. The cofactor is [4Fe-4S] cluster.

The enzyme catalyses Couples ATP hydrolysis with the unwinding of duplex DNA at the replication fork by translocating in the 5'-3' direction. This creates two antiparallel DNA single strands (ssDNA). The leading ssDNA polymer is the template for DNA polymerase III holoenzyme which synthesizes a continuous strand.. It carries out the reaction ATP + H2O = ADP + phosphate + H(+). Its function is as follows. DNA-dependent ATPase and 5'-3' DNA helicase. Unwinds D-loops, R-loops, forked DNA and G-quadruplex DNA. The polypeptide is ATP-dependent DNA helicase DinG (Shigella flexneri).